The primary structure comprises 126 residues: Small ribosomal subunit protein eS24 (126 aa).

Residues 98-126 (LYTKPQTSRKQRKEKKNRLKKAGKKTAKK) form a disordered region. Positions 104-126 (TSRKQRKEKKNRLKKAGKKTAKK) are enriched in basic residues.

The protein belongs to the eukaryotic ribosomal protein eS24 family.

The polypeptide is Small ribosomal subunit protein eS24 (rps24) (Dictyostelium discoideum (Social amoeba)).